Reading from the N-terminus, the 314-residue chain is 4-hydroxy-3-methylbut-2-enyl diphosphate reductase (314 aa).

Residue Cys12 participates in [4Fe-4S] cluster binding. (2E)-4-hydroxy-3-methylbut-2-enyl diphosphate contacts are provided by His43 and His81. Residues His43 and His81 each coordinate dimethylallyl diphosphate. Residues His43 and His81 each coordinate isopentenyl diphosphate. [4Fe-4S] cluster is bound at residue Cys103. His131 contacts (2E)-4-hydroxy-3-methylbut-2-enyl diphosphate. Position 131 (His131) interacts with dimethylallyl diphosphate. His131 contacts isopentenyl diphosphate. Glu133 serves as the catalytic Proton donor. Residue Thr170 participates in (2E)-4-hydroxy-3-methylbut-2-enyl diphosphate binding. Cys198 lines the [4Fe-4S] cluster pocket. Residues Ser226, Asn228, and Ser271 each coordinate (2E)-4-hydroxy-3-methylbut-2-enyl diphosphate. Dimethylallyl diphosphate-binding residues include Ser226, Asn228, and Ser271. Ser226, Asn228, and Ser271 together coordinate isopentenyl diphosphate.

It belongs to the IspH family. Requires [4Fe-4S] cluster as cofactor.

The catalysed reaction is isopentenyl diphosphate + 2 oxidized [2Fe-2S]-[ferredoxin] + H2O = (2E)-4-hydroxy-3-methylbut-2-enyl diphosphate + 2 reduced [2Fe-2S]-[ferredoxin] + 2 H(+). It catalyses the reaction dimethylallyl diphosphate + 2 oxidized [2Fe-2S]-[ferredoxin] + H2O = (2E)-4-hydroxy-3-methylbut-2-enyl diphosphate + 2 reduced [2Fe-2S]-[ferredoxin] + 2 H(+). Its pathway is isoprenoid biosynthesis; dimethylallyl diphosphate biosynthesis; dimethylallyl diphosphate from (2E)-4-hydroxy-3-methylbutenyl diphosphate: step 1/1. It functions in the pathway isoprenoid biosynthesis; isopentenyl diphosphate biosynthesis via DXP pathway; isopentenyl diphosphate from 1-deoxy-D-xylulose 5-phosphate: step 6/6. Catalyzes the conversion of 1-hydroxy-2-methyl-2-(E)-butenyl 4-diphosphate (HMBPP) into a mixture of isopentenyl diphosphate (IPP) and dimethylallyl diphosphate (DMAPP). Acts in the terminal step of the DOXP/MEP pathway for isoprenoid precursor biosynthesis. The chain is 4-hydroxy-3-methylbut-2-enyl diphosphate reductase from Halalkalibacterium halodurans (strain ATCC BAA-125 / DSM 18197 / FERM 7344 / JCM 9153 / C-125) (Bacillus halodurans).